A 373-amino-acid chain; its full sequence is Lipoyl amidotransferase LIPT1, mitochondrial (373 aa).

The transit peptide at 1 to 25 (MLIPLSMKNCFRLLCQHKVPAAGFK) directs the protein to the mitochondrion. Positions 57-243 (LEGKPILFLW…EYAAHHQVDG (187 aa)) constitute a BPL/LPL catalytic domain. Positions 107, 151, 161, and 179 each coordinate (R)-lipoyl-5'-AMP.

Belongs to the LplA family.

Its subcellular location is the mitochondrion. The enzyme catalyses (R)-lipoyl-5'-AMP + L-lysyl-[lipoyl-carrier protein] = N(6)-[(R)-lipoyl]-L-lysyl-[lipoyl-carrier protein] + AMP + 2 H(+). It carries out the reaction N(6)-[(R)-lipoyl]-L-lysyl-[glycine-cleavage complex H protein] + L-lysyl-[lipoyl-carrier protein] = L-lysyl-[glycine-cleavage complex H protein] + N(6)-[(R)-lipoyl]-L-lysyl-[lipoyl-carrier protein]. Its pathway is protein modification; protein lipoylation via exogenous pathway; protein N(6)-(lipoyl)lysine from lipoate: step 2/2. Lipoyl amidotransferase that catalyzes the transfer of lipoyl moieties from lipoyl-protein H of the glycine cleavage system (lipoyl-GCSH) to E2 subunits of the pyruvate dehydrogenase complex (PDCE2). Unable to catalyze the transfer of octanoyl from octanoyl-GCSH to PDCE2. In vitro, it is also able to catalyze the transfer of the lipoyl group from lipoyl-AMP to the specific lysine residue of lipoyl domains of lipoate-dependent enzymes but this reaction may not be physiologically relevant. This is Lipoyl amidotransferase LIPT1, mitochondrial from Mus musculus (Mouse).